A 448-amino-acid polypeptide reads, in one-letter code: UDP-N-acetylmuramoylalanine--D-glutamate ligase (448 aa).

112–118 lines the ATP pocket; it reads GSNAKST.

The protein belongs to the MurCDEF family.

The protein localises to the cytoplasm. The catalysed reaction is UDP-N-acetyl-alpha-D-muramoyl-L-alanine + D-glutamate + ATP = UDP-N-acetyl-alpha-D-muramoyl-L-alanyl-D-glutamate + ADP + phosphate + H(+). Its pathway is cell wall biogenesis; peptidoglycan biosynthesis. In terms of biological role, cell wall formation. Catalyzes the addition of glutamate to the nucleotide precursor UDP-N-acetylmuramoyl-L-alanine (UMA). In Acinetobacter baumannii (strain AB307-0294), this protein is UDP-N-acetylmuramoylalanine--D-glutamate ligase.